Consider the following 107-residue polypeptide: Latency-related protein 2 (107 aa).

Residues 1–44 (MAPPLPRTPTPTHPHSHAPPLPRTPTPAHPHSHAPPLPRTPTPT) are compositionally biased toward pro residues. The disordered stretch occupies residues 1-63 (MAPPLPRTPT…SIQHRQGKDT (63 aa)). 3 consecutive repeat copies span residues 2–17 (APPL…PHSH), 18–33 (APPL…PHSH), and 34–49 (APPL…PHSH). Positions 2–49 (APPLPRTPTPTHPHSHAPPLPRTPTPAHPHSHAPPLPRTPTPTHPHSH) are 3 X 17 AA tandem repeats. Residues 46 to 58 (PHSHAPPRSIQHR) show a composition bias toward basic residues.

In Homo sapiens (Human), this protein is Latency-related protein 2.